Consider the following 238-residue polypeptide: MPVLVITGTGTEVGKTVVTAAVAAAALAGGRTVAVLKAAQTGVGPDEAGDAQEVARLAGTATVAEVARFPDPLAPGTAARRAGRTPVRPEEVAEAATKLATEHDLVLVEGAGGLLVRFDAEGGTLADVAGLLDAPVLLVTSAGLGTLNTTELTARELRSRGLELPGLVIGSWPGAPDLAARCNLADLPDVSGAPLLGAVPAGAGSLSPAAFRSAAPHWLAPPLDGTWDADAFGDRHGP.

12-17 is a binding site for ATP; it reads EVGKTV. T16 contacts Mg(2+). K37 is a catalytic residue. T41 provides a ligand contact to substrate. ATP-binding positions include D50, 109–112, 170–171, and 200–202; these read EGAG, GS, and PAG. Mg(2+) is bound by residues D50 and E109.

The protein belongs to the dethiobiotin synthetase family. In terms of assembly, homodimer. It depends on Mg(2+) as a cofactor.

The protein localises to the cytoplasm. It carries out the reaction (7R,8S)-7,8-diammoniononanoate + CO2 + ATP = (4R,5S)-dethiobiotin + ADP + phosphate + 3 H(+). It participates in cofactor biosynthesis; biotin biosynthesis; biotin from 7,8-diaminononanoate: step 1/2. Functionally, catalyzes a mechanistically unusual reaction, the ATP-dependent insertion of CO2 between the N7 and N8 nitrogen atoms of 7,8-diaminopelargonic acid (DAPA, also called 7,8-diammoniononanoate) to form a ureido ring. The protein is ATP-dependent dethiobiotin synthetase BioD of Streptomyces coelicolor (strain ATCC BAA-471 / A3(2) / M145).